Reading from the N-terminus, the 653-residue chain is Macrolide export ATP-binding/permease protein MacB (653 aa).

Residues 6–244 form the ABC transporter domain; that stretch reads LALSHICREF…AAASLPADKP (239 aa). 42-49 is a binding site for ATP; that stretch reads GSSGSGKS. Helical transmembrane passes span 277-297, 526-546, 587-607, and 617-637; these read FLTMLGIIIGIAAVSSVVALG, LAFLVAAIAVISLVVGGIGVM, LGGIAGILIAVALGALLNLLL, and FSIGAAFLTSTAIGIFFGYFP.

It belongs to the ABC transporter superfamily. Macrolide exporter (TC 3.A.1.122) family. As to quaternary structure, homodimer.

Its subcellular location is the cell inner membrane. Its function is as follows. Non-canonical ABC transporter that contains transmembrane domains (TMD), which form a pore in the inner membrane, and an ATP-binding domain (NBD), which is responsible for energy generation. Confers resistance against macrolides. The sequence is that of Macrolide export ATP-binding/permease protein MacB from Bradyrhizobium diazoefficiens (strain JCM 10833 / BCRC 13528 / IAM 13628 / NBRC 14792 / USDA 110).